The chain runs to 82 residues: Penaeidin-3f (82 aa).

Positions 1–19 are cleaved as a signal peptide; that stretch reads MRLVACLVFLASFALVCQG. Q20 is subject to Pyrrolidone carboxylic acid. Intrachain disulfides connect C51–C66, C55–C73, and C67–C74. The residue at position 81 (S81) is a Serine amide.

Belongs to the penaeidin family.

It is found in the cytoplasmic granule. In terms of biological role, antibacterial and antifungal activity. Presents chitin-binding activity. This is Penaeidin-3f from Penaeus vannamei (Whiteleg shrimp).